A 169-amino-acid polypeptide reads, in one-letter code: Cell division inhibitor SulA (169 aa).

Residues 106–112 (ALRTGNY) form a ftsZ binding region. The tract at residues 162–169 (KIHSNLYH) is lon protease binding.

It belongs to the SulA family. Interacts with FtsZ. Is rapidly cleaved and degraded by the Lon protease once DNA damage is repaired.

Component of the SOS system and an inhibitor of cell division. Accumulation of SulA causes rapid cessation of cell division and the appearance of long, non-septate filaments. In the presence of GTP, binds a polymerization-competent form of FtsZ in a 1:1 ratio, thus inhibiting FtsZ polymerization and therefore preventing it from participating in the assembly of the Z ring. This mechanism prevents the premature segregation of damaged DNA to daughter cells during cell division. The chain is Cell division inhibitor SulA from Salmonella choleraesuis (strain SC-B67).